We begin with the raw amino-acid sequence, 242 residues long: N-alpha-acetyltransferase 60 (242 aa).

Over 1–192 (MTEVVPSSAL…GGHPPWTILD (192 aa)) the chain is Cytoplasmic. Residues 13-182 (VSLRLLCHDD…DGFTYVLYIN (170 aa)) enclose the N-acetyltransferase domain. Tyr38 contributes to the substrate binding site. Lys79 bears the N6-acetyllysine; by autocatalysis mark. Tyr97 is a catalytic residue. Leu99 contacts substrate. Position 101-103 (101-103 (LGV)) interacts with acetyl-CoA. N6-acetyllysine; by autocatalysis occurs at positions 105, 109, and 121. An acetyl-CoA-binding site is contributed by 109–114 (KHGIGS). Residue His138 is part of the active site. Acetyl-CoA contacts are provided by residues Asn143 and 150-153 (YENR). At Lys156 the chain carries N6-acetyllysine; by autocatalysis. Residues 162–173 (PYYYSIRGVLKD) form a required for homodimerization region. Residue Tyr165 participates in substrate binding. Residues 193-236 (YIQHLGSALASLSPCSIPHRVYRQAHSLLCSFLPWSGISSKSGI) constitute an intramembrane region (helical). At 237–242 (EYSRTM) the chain is on the cytoplasmic side.

The protein belongs to the acetyltransferase family. NAA60 subfamily. In terms of assembly, monomer and homodimer; monomer in presence of substrate and homodimer in its absence. Acetylated: autoacetylation is required for optimal acetyltransferase activity.

The protein resides in the golgi apparatus membrane. It catalyses the reaction N-terminal L-methionyl-[transmembrane protein] + acetyl-CoA = N-terminal N(alpha)-acetyl-L-methionyl-[transmembrane protein] + CoA + H(+). It carries out the reaction L-lysyl-[protein] + acetyl-CoA = N(6)-acetyl-L-lysyl-[protein] + CoA + H(+). N-alpha-acetyltransferase that specifically mediates the acetylation of N-terminal residues of the transmembrane proteins, with a strong preference for N-termini facing the cytosol. Displays N-terminal acetyltransferase activity towards a range of N-terminal sequences including those starting with Met-Lys, Met-Val, Met-Ala and Met-Met. Required for normal chromosomal segregation during anaphase. May also show histone acetyltransferase activity; such results are however unclear in vivo and would require additional experimental evidences. The polypeptide is N-alpha-acetyltransferase 60 (Homo sapiens (Human)).